The following is a 417-amino-acid chain: Transmembrane protease serine 11G (417 aa).

The Cytoplasmic segment spans residues 1–22 (MYQPGILGRRKRVCKPWTVALT). A helical; Signal-anchor for type II membrane protein transmembrane segment spans residues 23-43 (TTAALLALAVLIGLLVYFLVY). At 44 to 417 (EEKTHYYQAS…RNWIKSKTNI (374 aa)) the chain is on the extracellular side. The SEA domain maps to 46–165 (KTHYYQASFW…PYLREMNAAQ (120 aa)). In terms of domain architecture, Peptidase S1 spans 186–416 (IADGKPAGSN…YRNWIKSKTN (231 aa)). An intrachain disulfide couples cysteine 211 to cysteine 227. Residues histidine 226 and aspartate 271 each act as charge relay system in the active site. 2 disulfide bridges follow: cysteine 336/cysteine 352 and cysteine 363/cysteine 392. The Charge relay system role is filled by serine 367.

Belongs to the peptidase S1 family. As to expression, highest expression in lung and tongue. Also expressed in brain, colon, heart and liver. Isoform 1 is the predominant form in tongue whereas both isoforms are expressed in similar amounts in lung. At the cellular level, expression is confined to epithelial cells within the cleft of the circumvallate papillae extending into the ducts of the minor salivary glands, the respiratory epithelium of the nasal cavity and tear gland ducts.

It is found in the membrane. In Rattus norvegicus (Rat), this protein is Transmembrane protease serine 11G (Tmprss11g).